Here is a 225-residue protein sequence, read N- to C-terminus: Protein-L-isoaspartate O-methyltransferase (225 aa).

Ser-75 is a catalytic residue.

This sequence belongs to the methyltransferase superfamily. L-isoaspartyl/D-aspartyl protein methyltransferase family.

The protein resides in the cytoplasm. The enzyme catalyses [protein]-L-isoaspartate + S-adenosyl-L-methionine = [protein]-L-isoaspartate alpha-methyl ester + S-adenosyl-L-homocysteine. Its function is as follows. Catalyzes the methyl esterification of L-isoaspartyl residues in peptides and proteins that result from spontaneous decomposition of normal L-aspartyl and L-asparaginyl residues. It plays a role in the repair and/or degradation of damaged proteins. The protein is Protein-L-isoaspartate O-methyltransferase of Xanthomonas axonopodis pv. citri (strain 306).